The following is a 381-amino-acid chain: 4-hydroxyphenylpyruvate dioxygenase (381 aa).

2 consecutive VOC domains span residues 22-156 and 184-338; these read GMDA…LVDR and AIDH…IFTK. 3 residues coordinate Fe cation: His-187, His-270, and Glu-349.

The protein belongs to the 4HPPD family. In terms of assembly, homodimer. Fe cation is required as a cofactor.

It catalyses the reaction 3-(4-hydroxyphenyl)pyruvate + O2 = homogentisate + CO2. It participates in amino-acid degradation; L-phenylalanine degradation; acetoacetate and fumarate from L-phenylalanine: step 3/6. This Streptomyces avermitilis (strain ATCC 31267 / DSM 46492 / JCM 5070 / NBRC 14893 / NCIMB 12804 / NRRL 8165 / MA-4680) protein is 4-hydroxyphenylpyruvate dioxygenase (hpd).